The sequence spans 625 residues: Folylpolyglutamate synthase (625 aa).

141 to 144 contacts ATP; it reads GKGS. Residues serine 165, glutamate 234, and histidine 262 each coordinate Mg(2+). Residues arginine 384 and aspartate 414 each coordinate ATP.

Belongs to the folylpolyglutamate synthase family. A monovalent cation serves as cofactor.

The protein resides in the mitochondrion inner membrane. It is found in the mitochondrion matrix. The catalysed reaction is (6S)-5,6,7,8-tetrahydrofolyl-(gamma-L-Glu)(n) + L-glutamate + ATP = (6S)-5,6,7,8-tetrahydrofolyl-(gamma-L-Glu)(n+1) + ADP + phosphate + H(+). It functions in the pathway cofactor biosynthesis; tetrahydrofolylpolyglutamate biosynthesis. Functionally, catalyzes conversion of folates to polyglutamate derivatives allowing concentration of folate compounds in the cell and the intracellular retention of these cofactors, which are important substrates for most of the folate-dependent enzymes that are involved in one-carbon transfer reactions involved in purine, pyrimidine and amino acid synthesis. Essential for organellar and whole-plant folate homeostasis. The sequence is that of Folylpolyglutamate synthase from Arabidopsis thaliana (Mouse-ear cress).